Consider the following 785-residue polypeptide: MSSAKTFTKHISFDDLAPSLIDDQATIIKNDSHHVGLNNHFLHIPPQFNPVYKNTLTGSHGSNDLATDESLDSPEDEEASSPLQLGTPTSTTSGVPHFYTQVFSPAAHDPSKSYLRSPSVERSRSESPMFRSRRRTSVRLPPPPKVSVLKKSRKAADEQGPIDDIDIGDLDFELERKMTKMTERNTQKNSGSRKGYTQAAFANLNEVEDRIETKSMVDLSESENMESSKKRSKSFAGMTDEELAKLEEFYISKGRSNKTKIDQFDFGEQVPVYLNTTESKTDSSNVTDPLAAIYPSRPTIVHNAISMTIDHPDYENYISNTKEKLNCKDKDDDVDLRVVSCYISGRRYTWSSVDWYVENLTRNGDHLVIITTIPEFEAKIDTLAYKEKRRHRLERMTSNTSESMTTASHSLIGPDLSSPLSTGIRIEAIHNEAKQTCSDILNYYARRLATKIVRISIEMVKENSTRSAIISATSLYRPSLQVISTVSANIQIKFRNGKVKLPFFLMKHFAMPAFVVPFEFIKPELLIKPRVDKDEQDNSDDLKTEVRKKERLQWLSALIRRTLENPFTKHKVVDSDDEESDSDESVTSVNEYFPISPEKKEEMEFFDKMGYVRPKPSRQVLLDDNTLMKYDSSGRKLTPIESRNSRRSSKRSSRIQFNNNGIYKVKSMVDDIYNHETASTPHIKTALKWDNEDPKMKFTSHPMRKTKSAGLSPRTSSTSSSSGQRKAHHHHHHHNHVSRTKTTESTKSGNSKKDSSSSSTNDHQFKRSEKKKKSKFGSIFKKVFG.

Over residues 53 to 65 (KNTLTGSHGSNDL) the composition is skewed to polar residues. Positions 53 to 162 (KNTLTGSHGS…RKAADEQGPI (110 aa)) are disordered. A compositionally biased stretch (acidic residues) spans 66–79 (ATDESLDSPEDEEA). Over residues 81–94 (SPLQLGTPTSTTSG) the composition is skewed to polar residues. Ser215 carries the phosphoserine modification. Disordered regions lie at residues 571-590 (KVVD…TSVN) and 631-657 (DSSG…RIQF). The span at 575 to 584 (SDDEESDSDE) shows a compositional bias: acidic residues. At Ser667 the chain carries Phosphoserine. Residues 693-785 (DPKMKFTSHP…FGSIFKKVFG (93 aa)) are disordered. The span at 725–739 (RKAHHHHHHHNHVSR) shows a compositional bias: basic residues. Over residues 776-785 (FGSIFKKVFG) the composition is skewed to low complexity.

This is an uncharacterized protein from Saccharomyces cerevisiae (strain ATCC 204508 / S288c) (Baker's yeast).